The sequence spans 751 residues: Photosystem I P700 chlorophyll a apoprotein A1 (751 aa).

The next 8 membrane-spanning stretches (helical) occupy residues 73 to 96, 159 to 182, 198 to 222, 294 to 312, 349 to 372, 388 to 414, 436 to 458, and 533 to 551; these read VFSA…FHGA, LYTT…FHYH, LNHH…HVSL, TVHH…GHQY, WHAQ…HHMY, LSLF…IFMV, AMIS…LYIH, and FMVH…LILL. Positions 575 and 584 each coordinate [4Fe-4S] cluster. The next 2 membrane-spanning stretches (helical) occupy residues 591 to 612 and 665 to 687; these read HVFL…HFSW and LSAY…MFLF. A chlorophyll a'-binding site is contributed by histidine 676. Residues methionine 684 and tyrosine 692 each coordinate chlorophyll a. Tryptophan 693 provides a ligand contact to phylloquinone. Residues 725–745 form a helical membrane-spanning segment; the sequence is AVGVAHYLLGGIATTWSFFLA.

Belongs to the PsaA/PsaB family. As to quaternary structure, the PsaA/B heterodimer binds the P700 chlorophyll special pair and subsequent electron acceptors. PSI consists of a core antenna complex that captures photons, and an electron transfer chain that converts photonic excitation into a charge separation. The eukaryotic PSI reaction center is composed of at least 11 subunits. The cofactor is P700 is a chlorophyll a/chlorophyll a' dimer, A0 is one or more chlorophyll a, A1 is one or both phylloquinones and FX is a shared 4Fe-4S iron-sulfur center..

It localises to the plastid. Its subcellular location is the chloroplast thylakoid membrane. It catalyses the reaction reduced [plastocyanin] + hnu + oxidized [2Fe-2S]-[ferredoxin] = oxidized [plastocyanin] + reduced [2Fe-2S]-[ferredoxin]. In terms of biological role, psaA and PsaB bind P700, the primary electron donor of photosystem I (PSI), as well as the electron acceptors A0, A1 and FX. PSI is a plastocyanin/cytochrome c6-ferredoxin oxidoreductase, converting photonic excitation into a charge separation, which transfers an electron from the donor P700 chlorophyll pair to the spectroscopically characterized acceptors A0, A1, FX, FA and FB in turn. Oxidized P700 is reduced on the lumenal side of the thylakoid membrane by plastocyanin or cytochrome c6. This chain is Photosystem I P700 chlorophyll a apoprotein A1, found in Chlorella vulgaris (Green alga).